Consider the following 543-residue polypeptide: MDRGSHRNSSPARTPPQASPARTSPARAPPQASPARTPPQASPARTPPQASPARAPPPQASPARASPARAPPSRSSSGRSSSARSASTTSSPTRVYLVRATPVGAVPIRASPARSAPATRATRESPGLSFPKFSWQETQRQLPLIGCVILLISLVISLILLFYFWRGHTGIKYKEPLESCPIHAVRCDGVVDCKMKSDELGCVRFDWDKSLLKVYSGSSGEWLPVCSSSWNDTDSKRTCQQLGFDSAYRTTEVAHRDITSSFLLSEYNTTIQESLYRSQCSSRRYVSLQCSHCGLRAMTGRIVGGALTSESKWPWQVSLHFGTTHICGGTLIDAQWVLTAAHCFFVTREKLLEGWKVYAGTSNLHQLPEAASISQIIINGNYTDEQDDYDIALIRLSKPLTLSAHIHPACLPMHGQTFGLNETCWITGFGKTKETDEKTSPFLREVQVNLIDFKKCNDYLVYDSYLTPRMMCAGDLRGGRDSCQGDSGGPLVCEQNNRWYLAGVTSWGTGCGQKNKPGVYTKVTEVLPWIYRKMESEVRFRKS.

Disordered stretches follow at residues 1–96 and 109–129; these read MDRG…TRVY and RASP…PGLS. At 1 to 143 the chain is on the cytoplasmic side; the sequence is MDRGSHRNSS…SWQETQRQLP (143 aa). Tandem repeats lie at residues 14-17 and 18-22. The 4 X 4 AA repeats of T-P-P-Q stretch occupies residues 14–49; it reads TPPQASPARTSPARAPPQASPARTPPQASPARTPPQ. An 8 X 5 AA repeats of A-S-P-A-R region spans residues 18-69; the sequence is ASPARTSPARAPPQASPARTPPQASPARTPPQASPARAPPPQASPARASPAR. Residues 23 to 27 form a 2-2; approximate repeat; the sequence is TSPAR. A compositionally biased stretch (pro residues) spans 27-60; that stretch reads RAPPQASPARTPPQASPARTPPQASPARAPPPQA. Residues 28–31 form a 1-2; approximate repeat; it reads APPQ. 5 consecutive repeat copies span residues 32–36, 37–40, 41–45, 46–49, and 50–54. The stretch at 55–59 is one 2-6; approximate repeat; the sequence is APPPQ. Repeat copies occupy residues 60-64 and 65-69. Low complexity-rich tracts occupy residues 61–94 and 109–120; these read SPAR…SPTR and RASPARSAPATR. Residues 144-164 traverse the membrane as a helical; Signal-anchor for type II membrane protein segment; the sequence is LIGCVILLISLVISLILLFYF. At 165–543 the chain is on the extracellular side; the sequence is WRGHTGIKYK…MESEVRFRKS (379 aa). The LDL-receptor class A domain maps to 180–202; the sequence is CPIHAVRCDGVVDCKMKSDELGC. The 103-residue stretch at 199 to 301 folds into the SRCR domain; the sequence is ELGCVRFDWD…HCGLRAMTGR (103 aa). 3 disulfides stabilise this stretch: Cys226–Cys290, Cys239–Cys293, and Cys327–Cys343. N-linked (GlcNAc...) asparagine glycans are attached at residues Asn231 and Asn268. The Peptidase S1 domain maps to 302–535; sequence IVGGALTSES…VLPWIYRKME (234 aa). The Charge relay system role is filled by His342. Asn381 carries N-linked (GlcNAc...) asparagine glycosylation. The active-site Charge relay system is the Asp390. Asn421 carries an N-linked (GlcNAc...) asparagine glycan. Cystine bridges form between Cys424/Cys493, Cys456/Cys472, and Cys483/Cys511. The active-site Charge relay system is the Ser487.

The protein belongs to the peptidase S1 family. As to quaternary structure, interacts with SPINT1/HAI-1; the interaction promotes the phosphorylation and cell membrane localization of TMPRSS13. Interacts with SPINT2/HAI-2; the interaction promotes the phosphorylation and cell membrane localization of TMPRSS13. In terms of processing, the inactive zymogen is post-translationally modified and then trafficked to the cell surface, whereby it undergoes autocatalytic cleavage resulting in an activated form that is released extracellularly. Phosphorylation is required for localization at the cell surface. Phosphorylation increases following inhibition of protease activity by SPINT2/HAI-2. Expressed in the suprabasal squamous epithelium of the epidermis, hair follicles, oral epithelium, cornea, upper digestive tract, transitional epithelium of the bladder, prostate, heart, intestine, kidney and thymus.

It is found in the cell membrane. Its subcellular location is the secreted. The protein localises to the cytoplasm. Its activity is regulated as follows. Cleavage of HGF is inhibited by SPINT1/HAI-1 via the BPTI/Kunitz inhibitor 1 domain. Serine protease. Cleaves the proform of PRSS8/prostasin to form the active protein. Cleaves the proform of HGF to form the active protein which promotes MAPK signaling. Promotes the formation of the stratum corneum and subsequently the epidermal barrier in embryos. This is Transmembrane protease serine 13 (Tmprss13) from Mus musculus (Mouse).